The primary structure comprises 1932 residues: DOCK-like protein 1 (1932 aa).

One can recognise a DOCKER domain in the interval 1410–1824 (LLEANRPELF…EIERYSRTLS (415 aa)). Positions 1908 to 1921 (STFLAGSQPNTNTD) are enriched in polar residues. The segment at 1908–1932 (STFLAGSQPNTNTDSQHKHDYSHSG) is disordered. Residues 1922-1932 (SQHKHDYSHSG) show a composition bias toward basic and acidic residues.

This sequence belongs to the DOCK family. Forms an active heterodimer with LMO1.

The protein resides in the cytoplasm. It is found in the mitochondrion. Forms a transiant heterodimeric complex with LMO1, that acts as a guanine nucleotide exchange factor exchange factor (GEF) for the small GTPase RHO5. DCK1, LMO1 and RHO5 relocate to mitochondria upon oxidative stress and trigger cell death. The DCK1/LMO1/RHO5 signaling module mediates mitochondrial turnover under nitrogen starvation conditions via mitophagy. The DCK1/LMO1/RHO5 signaling module plays also a function in cell wall integrity signaling. This Saccharomyces cerevisiae (strain ATCC 204508 / S288c) (Baker's yeast) protein is DOCK-like protein 1.